A 917-amino-acid chain; its full sequence is Isoleucine--tRNA ligase (917 aa).

The L-isoleucyl-5'-AMP site is built by proline 56, histidine 67, glutamate 554, glycine 555, aspartate 557, glutamine 558, and histidine 585. Residues 57–67 carry the 'HIGH' region motif; that stretch reads PYANGNLHMGH. Positions 595–599 match the 'KMSKS' region motif; that stretch reads KMSKS. Position 598 (lysine 598) interacts with ATP. Arginine 632 and glutamine 640 together coordinate tRNA(Ile). Residues cysteine 886, cysteine 889, cysteine 906, and cysteine 909 each contribute to the Zn(2+) site.

It belongs to the class-I aminoacyl-tRNA synthetase family. IleS type 1 subfamily. Monomer. Requires Zn(2+) as cofactor.

It localises to the cytoplasm. The enzyme catalyses tRNA(Ile) + L-isoleucine + ATP = L-isoleucyl-tRNA(Ile) + AMP + diphosphate. In terms of biological role, catalyzes the attachment of isoleucine to tRNA(Ile). As IleRS can inadvertently accommodate and process structurally similar amino acids such as valine, to avoid such errors it has two additional distinct tRNA(Ile)-dependent editing activities. One activity is designated as 'pretransfer' editing and involves the hydrolysis of activated Val-AMP. The other activity is designated 'posttransfer' editing and involves deacylation of mischarged Val-tRNA(Ile). The sequence is that of Isoleucine--tRNA ligase (ileS) from Staphylococcus aureus.